The sequence spans 588 residues: Aspartate--tRNA ligase (588 aa).

An L-aspartate-binding site is contributed by Glu-172. Residues 196–199 (QLFK) are aspartate. Arg-218 lines the L-aspartate pocket. ATP is bound by residues 218–220 (RDE) and Gln-227. His-449 is a binding site for L-aspartate. Position 483 (Glu-483) interacts with ATP. An L-aspartate-binding site is contributed by Arg-490. Residue 535-538 (GLDR) coordinates ATP.

This sequence belongs to the class-II aminoacyl-tRNA synthetase family. Type 1 subfamily. In terms of assembly, homodimer.

Its subcellular location is the cytoplasm. It catalyses the reaction tRNA(Asp) + L-aspartate + ATP = L-aspartyl-tRNA(Asp) + AMP + diphosphate. Catalyzes the attachment of L-aspartate to tRNA(Asp) in a two-step reaction: L-aspartate is first activated by ATP to form Asp-AMP and then transferred to the acceptor end of tRNA(Asp). The sequence is that of Aspartate--tRNA ligase from Pasteurella multocida (strain Pm70).